The sequence spans 5154 residues: MTLKIKCVANYIKEKIPNVLFLCDPEARLQQLTASVPLCEQRKYFKQTNKRLEESMGAMHRKMAKVISGLQSKVLPPMSPKVVTEEEVNRMLTPSEFLKEMSLTTEQKLASTRIICRPQITELLDMGETTHQKFSRVDLDQALFQPFPSEIIFQNYSPCEVYEVPLVLRNNDKIPRMVKVVEESSPYFKIISPKDIGHKVAPGVPSVFRILFTPEENKDYAHMLTCITEREKFIVPVKARGARAILDFPDELNFSTCPVKYNTQKVLLVRNIGNKDSMFHLKTRSPYSVEPTGGILNVGESMQLEVDFEPQTVGSHDGKLIVTYDTGEMVFVCLYGVAIDVNIRLDKNSLIMEKTYISLANQRSITIHNRTNIIAHFQWKVFATEEEEDKEKYKICDGLNKEEKQETSMILEDSVLDPSLRERLSIISRTFENQRKLVQGDSMLFLDHVFTIEPPEGDVWPNSSAEITVYFNPLEAKLYQQTVYCDISGREIRLPLRIRGEGMGPKLHFNFELLDIGKVFIGSAHCYEAILSNKGSIDALFNVIPPTSALGACFVFNPKEGIIEPSGVQAVQISFSSTILGYFEEEFLIDVNGSPEPVKMTIRGCVIGPTFHFNVPALNFGNVSYGFPHTLMCSLNNTSLVPMTFKLRVRGDGEGMSSIPSYSQESDSKQWSGINTEMPTTKPKEFTISPNSGTIRAQGFTAIKVTLCSNTVQKYELALVVDVEGIGEEVLALLITARCVVPKLQLVTTEVDFGRCFLKYPYEKTIQLVNHDDLPGCYKVLPQLYENSPPVLLSSPSPCGVISPHSTVSIPLALETQVIGAHRSIVYISVFGSQEAPLACNIQSIGEGPVIFIHPTQIDFGNIYVLKDTSRILQLSNQSFIPAVFRVRMANKKSLWTVKPSEGAVPAEDDIPLTLTANLDDIVTFKDTVILEIKHSNTYRIPIQATGIGSTIVSDKPFAPELNLGAHFSLDTHYYRFKLTNKGRRVQQLFWMNDDFRPKEKQSKKEPGKKGSTSSSRRQSKASQEPTDNGNPVFQLYPVRMELYPGQTIDVILEGYSATPKKVKEKLVCQAIVGTQKGKSLLMSVNIICEFIAPIIQLSAKQLLYRLEKKPNSNLESDYQSLVIKNITTLPVNMLLSTTRPFFICETDKSLLPATPKPIKLEVDEEKHLLIKFDPSYRNDLNNWVAEEVLSIKYLEHPQVDNLGLRAEVHYPNLSFEVMDIDFGCILNDTEVIRYIMITNCSPLVVKFRWFFLVDEEENQIRFAPCMKPYSAFLSQMESIAATSVTASSLAAPHTVEYTEMDFSDSIKTILMDDEAGPEEIKKPATSTMVSEAIKYSSAGTERSQSQPDYPECMWIYEQDEMLSIGIEEVFDILPLYGVLRPYSSHQISFTFYGHCDIIARAKALCEVEGGPTYEVLLKGEASLVNYSFDTKDINYGLQLFDHVTEREITLKNTGKVGFEFNVLSNYRSSQRNLLPGVPLILPLSGFIQSNKEQVLKVYYLPGIPEVFQRNFQIQIAHLVPENITLYGEGIFPRISLDLHRNLQGNEKYEHFLEQAKKNVEKEYTKYEAVDQYEVMAEELPEEETAEISAHVQMEVERLIVQDYALEHQRSISNNTEDIYFSQRSCRKLTKVQLPEYILDFGYIVLGDVRTHIVKITNTSHFPVSFHAEKQVLHETGFSTELDRVKNLPYYETETFEVRCDPQGANLPVGNKEVILPIKVYGGPTIHLCLQATVIIPSMTLSCNKIEFATIQCGQCMVETIQLSNHLQVPCEWFVHTPKSTNKLDKHMPKYLRRKLQAEMIPKSRIFEIQPTSGILDPGERANVQVKFMPKEEKLYSQSLLFQIGQSSQKLTLLAQGQGLEPRLEFSPSVLELGPLLPFASGDEAEVIVRNPCNFPIEFYSLEFDQQYLLEEKMLRQLKGYDSYNTLLLPPRNPGEKLPPEVYDYFKEMKKSKEEHMKAKYMENLENEEEEMNTSDQGTTSTKRTSISRGISVTSNLEERHLTIEAKNYLDEDDYEESLEKLTFQTDKMQSTDSHSVEEVGEVESNPVSKAIARHLGIDISAEGRLAKNRKGIAIIVHGTPLSGKTANAISMAKFYNAACLNIDSIVLEALSDTNNILGIRARELCIRAAIEQSMREAEESAHESSMTQNTVVPARLSTENLGRFTSELTLITQEYKVPKTVRGSVMLPKGKADSHFTGSQKQHHQHQSETPQVQISSSPLLPGPTHRRLSVSASIGGETGLMSCVLPDDLLIQILAERIQLSNCFRGVVFDGLDTLFARNAPSALHCLLKAIGSREHIYVINMSQDYVVMKAQEKAKKEQEENKRKEALAKEKERLQTLDEDEYDALTAEEKVAFDRDVRQALRERKKRELERLAKEMQEKKLQQELERQKEEDELKRKVKRPKAGPAAKEEPPLKKAQGATNKQLAAVAKIELKMESIERKVSVREHATLEETTRKKKAMTEYPLLIPISQEQEDSEGDFLKDSDKNLAQKFKIYDMCLKDVQNILMYWDRKQGMMVPHTGTDEMSHEADDQRQAPSGGGGRKGRKDRERERLEKERAEKERLEREKAERERLEKLKALEERSDVEGEGEEEHEGKKDLGVPFINIQSPDFEGVSWKQALESDKLPKGDQILDILGLGSSGPPIPPPVLFSIISYPAKRQSLVATEILKHFVFVIPPNDDIPLMDEKKDPEGDSDIFLNTIITKAQEEQPSPPKGSKQKLKDKPEQVRETQKEKRRTYSSRKGLPGGTSGSIVPMSDIDQNSFDGEHSQEKFIRLNHFRWIVPPNGEVTLRVHFSSLDVGNYDQTFNFELLGTRRQYQLYCRGVCTYPYICRDPKVVFSQRKKDMKLKEVVVKKYVVSMEKFYFGPLLCGKSRDKYKSSLFPGNMETLTILNDSPMVVEAYFCFQHDIKASTYFLEPVNMTLKPNEKQALNVWAYPTAVGIFEDSIVCCIKENPEPAIFKLSCQGIRPEIEVEPRQLHFDRLLLHRKETKIVILRNVTPLPVAWRISNLEHLGEDFTVSMMQGTMLPKGEYGLQVHFQPSKPVNIKKAIRIEVLDAENLVGVVQIENILIFAESYDIALDITFPKGAEGGLDFGTLRVMEEVKQTLQLKNRGKYEIIFSFTVDTLGVLPTNLSSMISVQPKRGTLASIDKPTTVQVFFRARKEVKIDCQPILRCQIIEPTLPEGEIIASIPIKFSVNAVYSKFTISPSSIINFGALICGTRKSITFTIENQGIIDFKYALYRLTGESPILQKKITSHMRHGRTRESESFYKPGATKMAKFSDTVQKDTNIANQARFTHGMFTVYPGFGSIPSGGQQVITIECFADPVGRCEEFLAIDISDRDPRENPAGIPYTLLAEACLPAFVTDNNILIFEEHQICTSPNLYHILQTIQSGGLFVEDENKFIFCNVLVGHQAKARFKISNVGKISCDINIVIKPISNKPANRITDTFDVEPSKMCIGSRSHAFVTVLFTPQTMQTYQCIFEATLDGLPSNIARSRGLVFDIVGEGTLPRVTVIRPTLYNQHGNPLLLFKRLLLGHSEKLPLILKNNGTIPAQLHVDLRDQLGVFSLKGRPTTSYIYIMEENKPNEKVKKAHTASLVVSPGDTAEFDVFFHSNKIGRMTGTIHLSVINNQYEETMIHLVGESYEDDITLDNIHGLISSTSQESSDKSEVIEIAEESTMEDLVTAALMEHIQFGYCHIGISYNVSFTITNHSQVNVIRFEWPLLATLSFSPQIGHLHPGCSKDVVVTLKSESPITLKKMCVKCKLSKIMFQLPVDQVPDWDDRMRTVKWVDAPRNTPLTLNTKRKVIEMDPEPAHSVVEENYRELRIQFSANVDFASYQCETTEVFFKETLVYQTRVFEFDLVNTGQVLLEFCWISEEASKAVSFAMPERQGSSQKELSQGSGSSLDSALDRWTEASPSPFSVEPPSGVVPVGKTQKLKVKFSPMDIGEFESSLYCQIPNLPLGEQGPILITKGRSVLPFCHFDLKESDYISGHRRNPELRGPGAGPLEPNTRVIEFTSVGIGGKNVQTFTILNPTNSTYSFCWTSEETESLQHPPAFVCLTEKGIIHPEKKAEIIFQFLPAHLDITEEFWTFSIPEHNISVPFLLVGKTTDPLISLDKSHLNFSSLLIGREARETVKIINKEEQGFNFAFQDNSRYSEGFNNSLIVCPMEGWIPPLSRFPVDIFFTPKQEGDVNFNLICNIKKKAHPLTLNVKAEGYTMNAEVKCRDRMGTTILLTSTQVNTINFYEVELNECVQCEFSFINTGKFNFSYQAELSGPKLLLQYLDFTPTDSSVDVGQSEPANLSFQPYQKCVLKGLELKIKISHGPTFVCNILGCAVSPAVHFSFTSHNFGTCFIYQAGMPPYKQILVVTNKEETSMSLDCLYTNTPHIEVNFNVDVIKPGKTLEIPITFYPREAISYRELIPFEINGLSQQTVEIKGKGTEMKLLVLDPANRIVKLGAVLPGQVVRKTVSLVNNSLAQLTFNHSVLFSIPELQEAKVITLEPFHTITMKPKEVCKLEITFAPKKRVPPFSEEVFMEWMGLLRPLFLLSGCCQALEISLDQEHLPFGPVVYQTQATRRILIMNTGDVGARFKWDVKKLKPHFSISPEEGYIISGTEVALEVTYHPTEIGKESLYKNILCFIQGGNPLCLTLSGTCVGPPVVKEVVNFNCQVRSRHTQTILLSNRSNQTWNLHPIFEGEHWEGPEFITLEAHQQNKPYEITYKPRTMNLENRKHQGTLFFPLPDGTGWLYALHGTAELPKAVANIYREVPCKTPYTELLPISNWLNKPQRFRVIVEILKPEKTDLSVTLKGLDYIDVLSGSKKDYKLNFFSYKEGLYTAKVIFRNEVTNEFLYYTVSFRVTPSGIIKTIQMTSPVRQSVSASIKLENPLPYSVTFSTECKLSDISLPSQFAVPPNSEGTFSFEFQPLKAGELCGRLTLHNSDLGYYQYELALKALPAPPEKPVHFQTVLGSSQSILAKFTNYTRLKTEYYCKTDCSDFHTEKVINAAPGAQGGTEVSVEVFFEPSHLGETKGILCLSSLIGGEYIIPLFGIALPPKPQGPFLIRAGYNIIIPFKNVFLHATSFSFIVENPAFSIRAAETVRPKKINNITVYFEGNPSGSKTPITSKLIVTCPQCEGTESGIKWVYYLKGITP.

Residues 409–800 (MILEDSVLDP…VLLSSPSPCG (392 aa)) are interaction with KIF9. Residues 997-1009 (RPKEKQSKKEPGK) are compositionally biased toward basic and acidic residues. Disordered regions lie at residues 997 to 1033 (RPKE…GNPV), 1966 to 1988 (ENEE…TSIS), 2193 to 2222 (ADSH…SPLL), 2383 to 2423 (KLQQ…QGAT), 2521 to 2572 (HTGT…KAER), and 2706 to 2762 (KAQE…DIDQ). Positions 1010–1024 (KGSTSSSRRQSKASQ) are enriched in low complexity. Residues 1948–1977 (EMKKSKEEHMKAKYMENLENEEEEMNTSDQ) adopt a coiled-coil conformation. Composition is skewed to polar residues over residues 1974-1988 (TSDQ…TSIS) and 2209-2220 (SETPQVQISSSP). A coiled-coil region spans residues 2308-2444 (YVVMKAQEKA…LKMESIERKV (137 aa)). Composition is skewed to basic and acidic residues over residues 2383–2398 (KLQQ…DELK), 2523–2535 (GTDE…DDQR), 2548–2572 (KDRE…KAER), and 2721–2734 (KLKD…ETQK). Residues 2543–2588 (GRKGRKDRERERLEKERAEKERLEREKAERERLEKLKALEERSDVE) adopt a coiled-coil conformation.

Interacts with KIF9. In terms of tissue distribution, expressed in brain and testis. Expressed in ciliated epithelial cells lining bronchi and oviduct, and in spermatocytes.

Its subcellular location is the cell projection. It is found in the cilium. The protein resides in the cytoplasm. The protein localises to the cytoskeleton. It localises to the cilium axoneme. Its subcellular location is the flagellum. In terms of biological role, required for ciliary motility. This is Hydrocephalus-inducing protein (Hydin) from Mus musculus (Mouse).